We begin with the raw amino-acid sequence, 329 residues long: Phenylalanine--tRNA ligase alpha subunit (329 aa).

Glutamate 254 lines the Mg(2+) pocket.

The protein belongs to the class-II aminoacyl-tRNA synthetase family. Phe-tRNA synthetase alpha subunit type 1 subfamily. Tetramer of two alpha and two beta subunits. Mg(2+) serves as cofactor.

The protein resides in the cytoplasm. The catalysed reaction is tRNA(Phe) + L-phenylalanine + ATP = L-phenylalanyl-tRNA(Phe) + AMP + diphosphate + H(+). This Histophilus somni (strain 129Pt) (Haemophilus somnus) protein is Phenylalanine--tRNA ligase alpha subunit.